The chain runs to 285 residues: MAHQAHPFRSVLYIPGSKERALEKAQGLAADAIIFDLEDAVAHDEKIHARDLLRKTLETADYGRRIRIVRVNGMDTEWGRDDVAAFAGSKADVILIPKVSSATDVQAVADLIPDVPLWAMMETALGMLNAAEIAAHPRLTGMVMGTNDLAKELTSRFRPDRLALQTGLGLCLLAARAHGLTIVDGVYNAFKDEDGLRAECEHGRDMGFDGKTLIHPAQLEIANEVFSPSSAEIELANRQIAAFEEAERHGQGVAVVDGKIVENLHIVTARQTLAKAEAIAAFGAS.

The substrate site is built by arginine 70 and glutamate 122. Mg(2+) is bound by residues glutamate 122 and aspartate 148.

It belongs to the HpcH/HpaI aldolase family. As to quaternary structure, homodimer or homotrimer. It depends on Mg(2+) as a cofactor.

It catalyses the reaction (S)-malyl-CoA + H2O = (S)-malate + CoA + H(+). Catalyzes the hydrolysis of (3S)-malyl-CoA to (3S)-malate and free CoA. Inactive towards beta-methylmalyl-CoA and other CoA esters. This Cereibacter sphaeroides (strain ATCC 17025 / ATH 2.4.3) (Rhodobacter sphaeroides) protein is (3S)-malyl-CoA thioesterase.